Here is a 362-residue protein sequence, read N- to C-terminus: Anthranilate phosphoribosyltransferase 2 (362 aa).

Residues glycine 103, 106–107 (GD), threonine 111, 113–116 (NIST), 131–139 (KHGNRSASS), and serine 143 contribute to the 5-phospho-alpha-D-ribose 1-diphosphate site. Anthranilate is bound at residue glycine 103. Serine 115 serves as a coordination point for Mg(2+). Asparagine 134 provides a ligand contact to anthranilate. Arginine 189 contacts anthranilate. Mg(2+) contacts are provided by aspartate 248 and glutamate 249.

The protein belongs to the anthranilate phosphoribosyltransferase family. Homodimer. The cofactor is Mg(2+).

The catalysed reaction is N-(5-phospho-beta-D-ribosyl)anthranilate + diphosphate = 5-phospho-alpha-D-ribose 1-diphosphate + anthranilate. Its pathway is amino-acid biosynthesis; L-tryptophan biosynthesis; L-tryptophan from chorismate: step 2/5. Its function is as follows. Catalyzes the transfer of the phosphoribosyl group of 5-phosphorylribose-1-pyrophosphate (PRPP) to anthranilate to yield N-(5'-phosphoribosyl)-anthranilate (PRA). This Nostoc sp. (strain PCC 7120 / SAG 25.82 / UTEX 2576) protein is Anthranilate phosphoribosyltransferase 2.